Reading from the N-terminus, the 359-residue chain is 4-galactosyl-N-acetylglucosaminide 3-alpha-L-fucosyltransferase FUT6 (359 aa).

Over 1 to 14 the chain is Cytoplasmic; sequence MDPLGPAKPQWSWR. The chain crosses the membrane as a helical; Signal-anchor for type II membrane protein span at residues 15-34; the sequence is CCLTTLLFQLLVAVCFFSYL. Topologically, residues 35–359 are lumenal; it reads RVSRDDPTVY…QTRSIAAWFT (325 aa). Asn-46, Asn-91, Asn-153, and Asn-184 each carry an N-linked (GlcNAc...) asparagine glycan. Residues 73–112 form a determines site-specific fucosylation region; sequence KPIALPRCSEMVPGTADCNITADRKVYPQADAVIVHHREV.

The protein belongs to the glycosyltransferase 10 family. As to quaternary structure, homodimer and monomer. Monomer (secreted form). N-glycosylated. Post-translationally, proteolytic cleavage releases a secreted glycoform of 43 kDa.

It localises to the golgi apparatus. The protein resides in the golgi stack membrane. The protein localises to the secreted. It carries out the reaction a beta-D-galactosyl-(1-&gt;4)-N-acetyl-beta-D-glucosaminyl derivative + GDP-beta-L-fucose = a beta-D-galactosyl-(1-&gt;4)-[alpha-L-fucosyl-(1-&gt;3)]-N-acetyl-beta-D-glucosaminyl derivative + GDP + H(+). The catalysed reaction is an N-acetyl-alpha-neuraminyl-(2-&gt;3)-beta-D-galactosyl-(1-&gt;4)-N-acetyl-beta-D-glucosaminyl derivative + GDP-beta-L-fucose = an alpha-Neu5Ac-(2-&gt;3)-beta-D-Gal-(1-&gt;4)-[alpha-L-Fuc-(1-&gt;3)]-beta-D-GlcNAc derivative + GDP + H(+). The enzyme catalyses an alpha-Neu5Ac-(2-&gt;3)-beta-D-Gal-(1-&gt;4)-beta-D-GlcNAc-(1-&gt;3)-beta-D-Gal-(1-&gt;4)-[alpha-L-Fuc-(1-&gt;3)]-beta-D-GlcNAc derivative + GDP-beta-L-fucose = an alpha-Neu5Ac-(2-&gt;3)-beta-D-Gal-(1-&gt;4)-[alpha-L-Fuc-(1-&gt;3)]-beta-D-GlcNAc-(1-&gt;3)-beta-D-Gal-(1-&gt;4)-[alpha-L-Fuc-(1-&gt;3)]-beta-D-GlcNAc derivative + GDP + H(+). It catalyses the reaction a neolactoside nLc6Cer + GDP-beta-L-fucose = beta-D-Gal-(1-&gt;4)-[alpha-L-Fuc-(1-&gt;3)]-beta-D-GlcNAc-(1-&gt;3)-beta-D-Gal-(1-&gt;4)-beta-D-GlcNAc-(1-&gt;3)-beta-D-Gal-(1-&gt;4)-beta-D-Glc-(1&lt;-&gt;1')-Cer + GDP + H(+). It carries out the reaction a neolactoside nLc6Cer + GDP-beta-L-fucose = beta-D-galactosyl-(1-&gt;4)-N-acetyl-beta-D-glucosaminyl-(1-&gt;3)-beta-D-galactosyl-(1-&gt;4)-[alpha-L-fucosyl-(1-&gt;3)]-N-acetyl-beta-D-glucosaminyl-(1-&gt;3)-beta-D-galactosyl-(1-&gt;4)-beta-D-glucosyl-(1&lt;-&gt;1')-ceramide + GDP + H(+). The catalysed reaction is a neolactoside VI(3)-alpha-NeuNAc-nLc6Cer + GDP-beta-L-fucose = a neolactoside VI(3)-alpha-NeuAc,V(3)-alphaFuc-nLc6Cer + GDP + H(+). The enzyme catalyses beta-D-galactosyl-(1-&gt;4)-N-acetyl-D-glucosamine + GDP-beta-L-fucose = beta-D-galactosyl-(1-&gt;4)-[alpha-L-fucosyl-(1-&gt;3)]-N-acetyl-D-glucosamine + GDP + H(+). It catalyses the reaction N-acetyl-alpha-neuraminosyl-(2-&gt;3)-beta-D-galactosyl-(1-&gt;4)-N-acetyl-beta-D-glucosamine + GDP-beta-L-fucose = N-acetyl-alpha-neuraminosyl-(2-&gt;3)-beta-D-galactosyl-(1-&gt;4)-[alpha-L-fucosyl-(1-&gt;3)]-N-acetyl-beta-D-glucosamine + GDP + H(+). It carries out the reaction lactose + GDP-beta-L-fucose = beta-D-galactosyl-(1-&gt;4)-[alpha-L-fucosyl-(1-&gt;3)]-D-glucose + GDP + H(+). The catalysed reaction is alpha-L-Fuc-(1-&gt;2)-beta-D-Gal-(1-&gt;4)-D-Glc + GDP-beta-L-fucose = alpha-L-Fuc-(1-&gt;2)-beta-D-Gal-(1-&gt;4)-[alpha-L-Fuc-(1-&gt;3)]-D-Glc + GDP + H(+). The enzyme catalyses a beta-D-galactosyl-(1-&gt;4)-N-acetyl-beta-D-6-sulfooxy-glucosaminyl derivative + GDP-beta-L-fucose = a beta-D-galactosyl-(1-&gt;4)-[alpha-L-fucosyl-(1-&gt;3)]-N-acetyl-beta-D-6-sulfooxy-glucosaminyl derivative + GDP + H(+). It functions in the pathway protein modification; protein glycosylation. Its function is as follows. Catalyzes the transfer of L-fucose, from a guanosine diphosphate-beta-L-fucose, to the N-acetyl glucosamine (GlcNAc) of a distal alpha2,3 sialylated lactosamine unit of a glycoprotein- or glycolipid-linked sialopolylactosamines chain or of a distal or internal lactosamine unit of a neutral glycoprotein- or glycolipid-linked polylactosamines chain through an alpha-1,3 glycosidic linkage and participates in surface expression of the sialyl Lewis X (sLe(x)), Lewis X (Le(x)) and non sialylated VIM2 determinants. Moreover transfers fucose to H-type 2 (Fucalpha1-2Galbeta1-4GlcNAc) chain acceptor substrates and participates in difucosylated sialyl Lewis x determinants. Also fucosylates a polylactosamine substrate having a 6 sulfate modification at the GlcNAc moiety and gives rise to sialyl and non-sialyl 6-sulfo lewis X. Does not have activity towards type 1 ((Galbeta1-3GlcNAc)) and H-type 1 chain (Fucalpha1-2Galbeta1-3GlcNAc) acceptors substrates. This is 4-galactosyl-N-acetylglucosaminide 3-alpha-L-fucosyltransferase FUT6 from Pan troglodytes (Chimpanzee).